Consider the following 428-residue polypeptide: Serine--tRNA ligase (428 aa).

Position 233–235 (233–235) interacts with L-serine; the sequence is TAE. 264–266 contacts ATP; it reads RRE. Glu-287 contacts L-serine. 351 to 354 provides a ligand contact to ATP; sequence EVSS. Ser-387 is a binding site for L-serine.

Belongs to the class-II aminoacyl-tRNA synthetase family. Type-1 seryl-tRNA synthetase subfamily. Homodimer. The tRNA molecule binds across the dimer.

It is found in the cytoplasm. It catalyses the reaction tRNA(Ser) + L-serine + ATP = L-seryl-tRNA(Ser) + AMP + diphosphate + H(+). The enzyme catalyses tRNA(Sec) + L-serine + ATP = L-seryl-tRNA(Sec) + AMP + diphosphate + H(+). It participates in aminoacyl-tRNA biosynthesis; selenocysteinyl-tRNA(Sec) biosynthesis; L-seryl-tRNA(Sec) from L-serine and tRNA(Sec): step 1/1. In terms of biological role, catalyzes the attachment of serine to tRNA(Ser). Is also able to aminoacylate tRNA(Sec) with serine, to form the misacylated tRNA L-seryl-tRNA(Sec), which will be further converted into selenocysteinyl-tRNA(Sec). This is Serine--tRNA ligase from Salinibacter ruber (strain DSM 13855 / M31).